Consider the following 296-residue polypeptide: MSGLPLISRRRLLTAMALSPLLWQMNTAHAAAIDPNRIVALEWLPVELLLALGIVPYGVADTINYRLWVSEPPLPDSVIDVGLRTEPNLELLTEMKPSFMVWSAGYGPSPEMLARIAPGRGFNFSDGKQPLAMARKSLTEMADLLNLQSAAETHLAQYEDFIRSMKPRFVKRGARPLLLTTLIDPRHMLVFGPNSLFQEILDEYGIPNAWQGETNFWGSTAVSIDRLAAYKDVDVLCFDHDNSKDMDALMATPLWQAMPFVRAGRFQRVPAVWFYGATLSAMHFVRVLDNAIGGKA.

A signal peptide (tat-type signal) is located at residues 1–30 (MSGLPLISRRRLLTAMALSPLLWQMNTAHA). Residues 37–296 (RIVALEWLPV…VLDNAIGGKA (260 aa)) enclose the Fe/B12 periplasmic-binding domain. Fe(III)-coprogen contacts are provided by W68, R84, S103, Y106, F124, W217, W273, F274, and Y275.

It belongs to the bacterial solute-binding protein 8 family. In terms of assembly, the complex is composed of two ATP-binding proteins (FhuC), a transmembrane protein (FhuB) and a solute-binding protein (FhuD). FhuD interacts with FhuB. Substrate-loaded FhuD binds FhuB more strongly than FhuD alone. Exported by the Tat system. The position of the signal peptide cleavage has been experimentally proven. Can also be exported by the Sec system.

It localises to the periplasm. Part of the ABC transporter complex FhuCDB involved in iron(3+)-hydroxamate import. Binds the iron(3+)-hydroxamate complex and transfers it to the membrane-bound permease. Required for the transport of all iron(3+)-hydroxamate siderophores such as ferrichrome, gallichrome, desferrioxamine, coprogen, aerobactin, shizokinen, rhodotorulic acid and the antibiotic albomycin. The sequence is that of Iron(3+)-hydroxamate-binding protein FhuD (fhuD) from Escherichia coli (strain K12).